The following is a 173-amino-acid chain: NEDD4-binding protein 2-like 1 (173 aa).

The disordered stretch occupies residues 1–35 (MEESFLESFGRLSLRQQQPPPPRPPAPPPLRGTPP). Pro residues predominate over residues 18-32 (QPPPPRPPAPPPLRG).

In terms of assembly, interacts with dynactin subunit proteins, including DCTN4, DCTN5 and DCTN5.

Might play a role in adipocyte differentiation and triglyceride accumulation. The sequence is that of NEDD4-binding protein 2-like 1 (N4BP2L1) from Bos taurus (Bovine).